Reading from the N-terminus, the 181-residue chain is 3-hydroxyacyl-[acyl-carrier-protein] dehydratase FabZ (181 aa).

Residue histidine 54 is part of the active site.

The protein belongs to the thioester dehydratase family. FabZ subfamily.

It localises to the cytoplasm. The enzyme catalyses a (3R)-hydroxyacyl-[ACP] = a (2E)-enoyl-[ACP] + H2O. Involved in unsaturated fatty acids biosynthesis. Catalyzes the dehydration of short chain beta-hydroxyacyl-ACPs and long chain saturated and unsaturated beta-hydroxyacyl-ACPs. The chain is 3-hydroxyacyl-[acyl-carrier-protein] dehydratase FabZ from Yersinia pestis.